A 46-amino-acid chain; its full sequence is Large ribosomal subunit protein bL34 (46 aa).

The protein belongs to the bacterial ribosomal protein bL34 family.

The polypeptide is Large ribosomal subunit protein bL34 (rpmH) (Mycobacterium avium).